Consider the following 43-residue polypeptide: DRDSCVDKSKCAKYGYYYQCDECCKKAGDRAGTCEYFKCKCNP.

Cystine bridges form between cysteine 5-cysteine 23, cysteine 11-cysteine 34, cysteine 20-cysteine 39, and cysteine 24-cysteine 41.

Belongs to the ergtoxin family. Gamma-KTx 4 subfamily. In terms of tissue distribution, expressed by the venom gland.

It is found in the secreted. Reversibly blocks Kv11/ERG potassium channels. This chain is Potassium channel toxin gamma-KTx 4.4, found in Centruroides exilicauda (Bark scorpion).